The primary structure comprises 490 residues: Cytochrome P450 2C7 (490 aa).

Dimethylated arginine is present on Arg-144. Heme is bound at residue Cys-435.

The protein belongs to the cytochrome P450 family. It depends on heme as a cofactor.

The protein localises to the endoplasmic reticulum membrane. The protein resides in the microsome membrane. The catalysed reaction is an organic molecule + reduced [NADPH--hemoprotein reductase] + O2 = an alcohol + oxidized [NADPH--hemoprotein reductase] + H2O + H(+). In terms of biological role, cytochromes P450 are a group of heme-thiolate monooxygenases. In liver microsomes, this enzyme is involved in an NADPH-dependent electron transport pathway. It oxidizes a variety of structurally unrelated compounds, including steroids, fatty acids, and xenobiotics. The polypeptide is Cytochrome P450 2C7 (Cyp2c7) (Rattus norvegicus (Rat)).